Reading from the N-terminus, the 308-residue chain is Oxygen-dependent coproporphyrinogen-III oxidase (308 aa).

Ser100 provides a ligand contact to substrate. 2 residues coordinate a divalent metal cation: His104 and His114. His114 functions as the Proton donor in the catalytic mechanism. 116–118 (NFR) contributes to the substrate binding site. His153 and His183 together coordinate a divalent metal cation. Positions 248 to 283 (YVEFNLVFDRGTIFGLQSGGRTESILSSMPPMATWK) are important for dimerization. 266–268 (GGR) provides a ligand contact to substrate.

This sequence belongs to the aerobic coproporphyrinogen-III oxidase family. Homodimer. The cofactor is a divalent metal cation.

Its subcellular location is the cytoplasm. The catalysed reaction is coproporphyrinogen III + O2 + 2 H(+) = protoporphyrinogen IX + 2 CO2 + 2 H2O. It functions in the pathway porphyrin-containing compound metabolism; protoporphyrin-IX biosynthesis; protoporphyrinogen-IX from coproporphyrinogen-III (O2 route): step 1/1. In terms of biological role, involved in the heme biosynthesis. Catalyzes the aerobic oxidative decarboxylation of propionate groups of rings A and B of coproporphyrinogen-III to yield the vinyl groups in protoporphyrinogen-IX. The polypeptide is Oxygen-dependent coproporphyrinogen-III oxidase (Francisella philomiragia subsp. philomiragia (strain ATCC 25017 / CCUG 19701 / FSC 153 / O#319-036)).